The chain runs to 311 residues: Protease HtpX homolog 1 (311 aa).

2 helical membrane passes run 12 to 32 (VISL…IASL) and 35 to 55 (ISLF…WIIS). Residue H137 coordinates Zn(2+). E138 is a catalytic residue. Zn(2+) is bound at residue H141. The next 2 helical transmembrane spans lie at 159–179 (VLGY…FLAA) and 184–204 (LLFA…TFIL). Residue E216 participates in Zn(2+) binding.

It belongs to the peptidase M48B family. Zn(2+) serves as cofactor.

The protein resides in the cell membrane. The polypeptide is Protease HtpX homolog 1 (Saccharolobus solfataricus (strain ATCC 35092 / DSM 1617 / JCM 11322 / P2) (Sulfolobus solfataricus)).